Reading from the N-terminus, the 444-residue chain is Glutamyl-tRNA reductase (444 aa).

Residues 49–52, Ser-117, 122–124, and Gln-128 each bind substrate; these read TCNR and EPQ. Cys-50 (nucleophile) is an active-site residue. 202–207 is a binding site for NADP(+); the sequence is GAGETI.

The protein belongs to the glutamyl-tRNA reductase family. As to quaternary structure, homodimer.

It carries out the reaction (S)-4-amino-5-oxopentanoate + tRNA(Glu) + NADP(+) = L-glutamyl-tRNA(Glu) + NADPH + H(+). It functions in the pathway porphyrin-containing compound metabolism; protoporphyrin-IX biosynthesis; 5-aminolevulinate from L-glutamyl-tRNA(Glu): step 1/2. Catalyzes the NADPH-dependent reduction of glutamyl-tRNA(Glu) to glutamate 1-semialdehyde (GSA). The protein is Glutamyl-tRNA reductase of Mannheimia succiniciproducens (strain KCTC 0769BP / MBEL55E).